Consider the following 101-residue polypeptide: CRISPR-associated endoribonuclease Cas2 (101 aa).

Asp-8 is a binding site for Mg(2+).

This sequence belongs to the CRISPR-associated endoribonuclease Cas2 protein family. As to quaternary structure, homodimer, forms a heterotetramer with a Cas1 homodimer. The cofactor is Mg(2+).

CRISPR (clustered regularly interspaced short palindromic repeat), is an adaptive immune system that provides protection against mobile genetic elements (viruses, transposable elements and conjugative plasmids). CRISPR clusters contain sequences complementary to antecedent mobile elements and target invading nucleic acids. CRISPR clusters are transcribed and processed into CRISPR RNA (crRNA). Functions as a ssRNA-specific endoribonuclease. Involved in the integration of spacer DNA into the CRISPR cassette. This Treponema denticola (strain ATCC 35405 / DSM 14222 / CIP 103919 / JCM 8153 / KCTC 15104) protein is CRISPR-associated endoribonuclease Cas2.